The chain runs to 247 residues: DNA polymerase sliding clamp (247 aa).

The protein belongs to the PCNA family. In terms of assembly, homotrimer. The subunits circularize to form a toroid; DNA passes through its center. Replication factor C (RFC) is required to load the toroid on the DNA.

Its function is as follows. Sliding clamp subunit that acts as a moving platform for DNA processing. Responsible for tethering the catalytic subunit of DNA polymerase and other proteins to DNA during high-speed replication. This is DNA polymerase sliding clamp from Methanoregula boonei (strain DSM 21154 / JCM 14090 / 6A8).